A 316-amino-acid chain; its full sequence is Probable prolyl 4-hydroxylase 7 (316 aa).

Over 1-4 the chain is Cytoplasmic; that stretch reads MDSR. A helical; Signal-anchor for type II membrane protein membrane pass occupies residues 5–24; it reads IFLAFSLCFLFTLPLISSAP. The Lumenal portion of the chain corresponds to 25–316; that stretch reads NRFLTRSSNT…CRKSCKACSS (292 aa). N-linked (GlcNAc...) asparagine glycosylation is present at asparagine 96. The Fe2OG dioxygenase domain maps to 139-261; it reads NGESMQILHY…KWSATRWIHV (123 aa). Fe cation-binding residues include histidine 157 and aspartate 159. Residue asparagine 233 is glycosylated (N-linked (GlcNAc...) asparagine). Histidine 242 lines the Fe cation pocket. Residue lysine 252 participates in 2-oxoglutarate binding. The ShKT domain maps to 274-314; the sequence is CMDENVSCEKWAKAGECQKNPTYMVGSDKDHGYCRKSCKAC. 3 cysteine pairs are disulfide-bonded: cysteine 274-cysteine 314, cysteine 281-cysteine 307, and cysteine 290-cysteine 311. A glycan (N-linked (GlcNAc...) asparagine) is linked at asparagine 278.

This sequence belongs to the P4HA family. Requires Fe(2+) as cofactor. It depends on L-ascorbate as a cofactor.

Its subcellular location is the endoplasmic reticulum membrane. The enzyme catalyses L-prolyl-[collagen] + 2-oxoglutarate + O2 = trans-4-hydroxy-L-prolyl-[collagen] + succinate + CO2. Catalyzes the post-translational formation of 4-hydroxyproline in -Xaa-Pro-Gly- sequences in proline-rich peptide sequences of plant glycoproteins and other proteins. Hydroxyprolines are important constituent of many plant cell wall glycoproteins such as extensins, hydroxyproline-rich glycoproteins, lectins and arabinogalactan proteins. This Arabidopsis thaliana (Mouse-ear cress) protein is Probable prolyl 4-hydroxylase 7.